Here is a 398-residue protein sequence, read N- to C-terminus: S-adenosylmethionine synthase (398 aa).

Residue histidine 16 coordinates ATP. Aspartate 18 contributes to the Mg(2+) binding site. Glutamate 51 contributes to the K(+) binding site. L-methionine contacts are provided by glutamate 64 and glutamine 108. Residues 108–118 (QSADIAQGVDA) form a flexible loop region. Residues 176–178 (DSK), 242–243 (KF), aspartate 251, 257–258 (RK), alanine 274, and lysine 278 contribute to the ATP site. Aspartate 251 is a binding site for L-methionine. An L-methionine-binding site is contributed by lysine 282.

Belongs to the AdoMet synthase family. Homotetramer; dimer of dimers. Mg(2+) serves as cofactor. It depends on K(+) as a cofactor.

It localises to the cytoplasm. The enzyme catalyses L-methionine + ATP + H2O = S-adenosyl-L-methionine + phosphate + diphosphate. Its pathway is amino-acid biosynthesis; S-adenosyl-L-methionine biosynthesis; S-adenosyl-L-methionine from L-methionine: step 1/1. Catalyzes the formation of S-adenosylmethionine (AdoMet) from methionine and ATP. The overall synthetic reaction is composed of two sequential steps, AdoMet formation and the subsequent tripolyphosphate hydrolysis which occurs prior to release of AdoMet from the enzyme. This is S-adenosylmethionine synthase from Nitrobacter hamburgensis (strain DSM 10229 / NCIMB 13809 / X14).